A 280-amino-acid chain; its full sequence is Cis-2,3-dihydrobiphenyl-2,3-diol dehydrogenase (280 aa).

9–33 serves as a coordination point for NAD(+); that stretch reads LVTGGCAGLGRAIVDRFVCEGARVA. A substrate-binding site is contributed by S142. The active-site Proton acceptor is the Y155.

It belongs to the short-chain dehydrogenases/reductases (SDR) family.

It carries out the reaction (2R,3S)-3-phenylcyclohexa-3,5-diene-1,2-diol + NAD(+) = biphenyl-2,3-diol + NADH + H(+). It functions in the pathway xenobiotic degradation; biphenyl degradation; 2-hydroxy-2,4-pentadienoate and benzoate from biphenyl: step 2/4. The chain is Cis-2,3-dihydrobiphenyl-2,3-diol dehydrogenase (bphB) from Rhodococcus globerulus.